Here is a 199-residue protein sequence, read N- to C-terminus: Chaperone protein TorD (199 aa).

The protein belongs to the TorD/DmsD family. TorD subfamily.

It is found in the cytoplasm. Functionally, involved in the biogenesis of TorA. Acts on TorA before the insertion of the molybdenum cofactor and, as a result, probably favors a conformation of the apoenzyme that is competent for acquiring the cofactor. The protein is Chaperone protein TorD of Shigella dysenteriae serotype 1 (strain Sd197).